We begin with the raw amino-acid sequence, 232 residues long: Ribonuclease P protein component 3 (232 aa).

The protein belongs to the eukaryotic/archaeal RNase P protein component 3 family. Consists of a catalytic RNA component and at least 4-5 protein subunits. Forms a subcomplex with Rnp2 which stimulates the catalytic RNA.

The protein localises to the cytoplasm. The enzyme catalyses Endonucleolytic cleavage of RNA, removing 5'-extranucleotides from tRNA precursor.. Its function is as follows. Part of ribonuclease P, a protein complex that generates mature tRNA molecules by cleaving their 5'-ends. The chain is Ribonuclease P protein component 3 from Methanocaldococcus jannaschii (strain ATCC 43067 / DSM 2661 / JAL-1 / JCM 10045 / NBRC 100440) (Methanococcus jannaschii).